The primary structure comprises 538 residues: Serine/threonine-protein phosphatase 5 (538 aa).

3 TPR repeats span residues 13-46 (AEEFKSQANEAFKGHKYSSAIDLYTKAIELNSNN), 48-80 (VYWANRAFAHTKLEEYGSAIQDASKAIEVDSRY), and 81-114 (SKGYYRRGAAYLAMGKFKDALKDFQQVKRLSPND). 2 consecutive transmembrane segments (helical) span residues 163 to 183 (SSMPTKTALAAVVAAVMVVAV) and 185 to 205 (GFATTEILMVLVSVVLGTFWW). 4 residues coordinate Mn(2+): Asp-282, His-284, Asp-311, and Asn-343. His-344 acts as the Proton donor in catalysis. Residues His-392 and His-467 each contribute to the Mn(2+) site.

Belongs to the PPP phosphatase family. PP-5 (PP-T) subfamily. In terms of assembly, interacts with PHYA and PHYB, mostly when they are phosphorylated and in Pfr forms. Mn(2+) is required as a cofactor.

Its subcellular location is the endoplasmic reticulum membrane. The protein resides in the nucleus membrane. It is found in the cytoplasm. The protein localises to the nucleus. It localises to the nucleoplasm. Its subcellular location is the nucleus speckle. The catalysed reaction is O-phospho-L-seryl-[protein] + H2O = L-seryl-[protein] + phosphate. It catalyses the reaction O-phospho-L-threonyl-[protein] + H2O = L-threonyl-[protein] + phosphate. Activated by arachidonic acid (AA). Isoform 2 dephosphorylates phosphorylated phytochromes, with a preference toward Pfr forms, and enhances phytochrome-mediated photoresponses, probably by enhancing their stability and their binding affinity for light signal transducers such as NDPK2. Can use para-nitrophenylphosphate (pNPP) as substrate. In Arabidopsis thaliana (Mouse-ear cress), this protein is Serine/threonine-protein phosphatase 5 (PAPP5).